Reading from the N-terminus, the 391-residue chain is cAMP-dependent protein kinase regulatory subunit (391 aa).

The disordered stretch occupies residues Met-1–Gln-84. The interval Met-1–Phe-131 is dimerization and phosphorylation. Positions Thr-38–Phe-55 are enriched in polar residues. Position 92 is a phosphoserine (Ser-92). 3',5'-cyclic AMP-binding positions include Leu-132–Glu-261, Glu-210, Arg-219, Leu-264–Thr-381, Glu-331, and Arg-340.

This sequence belongs to the cAMP-dependent kinase regulatory chain family. Tetramer, composed of 2 regulatory (R) and 2 catalytic (C) subunits. In the presence of cAMP it dissociates into 2 active monomeric C subunits and an R dimer.

This chain is cAMP-dependent protein kinase regulatory subunit (PKAR), found in Colletotrichum orbiculare (strain 104-T / ATCC 96160 / CBS 514.97 / LARS 414 / MAFF 240422) (Cucumber anthracnose fungus).